A 289-amino-acid polypeptide reads, in one-letter code: Agmatinase (289 aa).

Mn(2+)-binding residues include His112, Asp135, His137, Asp139, Asp216, and Asp218.

It belongs to the arginase family. Agmatinase subfamily. Mn(2+) serves as cofactor.

The enzyme catalyses agmatine + H2O = urea + putrescine. The protein operates within amine and polyamine biosynthesis; putrescine biosynthesis via agmatine pathway; putrescine from agmatine: step 1/1. Functionally, catalyzes the formation of putrescine from agmatine. This is Agmatinase (speB) from Halalkalibacterium halodurans (strain ATCC BAA-125 / DSM 18197 / FERM 7344 / JCM 9153 / C-125) (Bacillus halodurans).